The primary structure comprises 105 residues: Intracellular chorismate mutase (105 aa).

One can recognise a Chorismate mutase domain in the interval 23-105; that stretch reads SQPVPEIDTL…LRLGRGRLGH (83 aa). Chorismate contacts are provided by arginine 61, valine 70, and glutamate 74.

As to quaternary structure, homodimer. Interacts with AroG.

The protein localises to the cytoplasm. The enzyme catalyses chorismate = prephenate. It participates in metabolic intermediate biosynthesis; prephenate biosynthesis; prephenate from chorismate: step 1/1. The formation of the complex with AroG activates the chorismate mutase activity. Its function is as follows. Catalyzes the Claisen rearrangement of chorismate to prephenate. Probably involved in the aromatic amino acid biosynthesis. The sequence is that of Intracellular chorismate mutase from Mycobacterium bovis (strain ATCC BAA-935 / AF2122/97).